Reading from the N-terminus, the 432-residue chain is ATP-dependent RNA helicase RhlB (432 aa).

The short motif at 9 to 37 (QNFADLGLQPQVIDGLNAKGFIKCTPIQA) is the Q motif element. The 180-residue stretch at 40–219 (LPVLLAGQDI…FEHMQEPEHV (180 aa)) folds into the Helicase ATP-binding domain. 53–60 (AQTGTGKT) provides a ligand contact to ATP. The short motif at 165 to 168 (DEAD) is the DEAD box element. The Helicase C-terminal domain occupies 245 to 390 (ALLQTLIEEE…QSDYDASALL (146 aa)). A disordered region spans residues 397 to 432 (LRLQRRPQQNRRNNNGQRQGGNRKHSRPRQPRNTQS). A compositionally biased stretch (basic residues) spans 417–426 (GNRKHSRPRQ).

This sequence belongs to the DEAD box helicase family. RhlB subfamily. As to quaternary structure, component of the RNA degradosome, which is a multiprotein complex involved in RNA processing and mRNA degradation.

The protein resides in the cytoplasm. It catalyses the reaction ATP + H2O = ADP + phosphate + H(+). Functionally, DEAD-box RNA helicase involved in RNA degradation. Has RNA-dependent ATPase activity and unwinds double-stranded RNA. This Aliivibrio fischeri (strain MJ11) (Vibrio fischeri) protein is ATP-dependent RNA helicase RhlB.